We begin with the raw amino-acid sequence, 588 residues long: MSSCVSSQPSSNRAAPQDELGGRGSSSSESQKPCEALRGLSSLSIHLGMESFIVVTECEPGCAVDLGLARDRPLEADGQEVPLDTSGSQARPHLSGRKLSLQERSQGGLAAGGSLDMNGRCICPSLPYSPVSSPQSSPRLPRRPTVESHHVSITGMQDCVQLNQYTLKDEIGKGSYGVVKLAYNENDNTYYAMKVLSKKKLIRQAGFPRRPPPRGTRPAPGGCIQPRGPIEQVYQEIAILKKLDHPNVVKLVEVLDDPNEDHLYMVFELVNQGPVMEVPTLKPLSEDQARFYFQDLIKGIEYLHYQKIIHRDIKPSNLLVGEDGHIKIADFGVSNEFKGSDALLSNTVGTPAFMAPESLSETRKIFSGKALDVWAMGVTLYCFVFGQCPFMDERIMCLHSKIKSQALEFPDQPDIAEDLKDLITRMLDKNPESRIVVPEIKLHPWVTRHGAEPLPSEDENCTLVEVTEEEVENSVKHIPSLATVILVKTMIRKRSFGNPFEGSRREERSLSAPGNLLTKKPTRECESLSELKEARQRRQPPGHRPAPRGGGGSALVRGSPCVESCWAPAPGSPARMHPLRPEEAMEPE.

A compositionally biased stretch (polar residues) spans 1–14 (MSSCVSSQPSSNRA). 2 disordered regions span residues 1–33 (MSSC…SQKP) and 78–100 (GQEV…RKLS). The residue at position 2 (Ser2) is an N-acetylserine. 5 positions are modified to phosphoserine: Ser100, Ser114, Ser129, Ser133, and Ser137. Over residues 128-139 (YSPVSSPQSSPR) the composition is skewed to low complexity. The interval 128-149 (YSPVSSPQSSPRLPRRPTVESH) is disordered. Residues 165–446 (YTLKDEIGKG…VPEIKLHPWV (282 aa)) form the Protein kinase domain. ATP-binding positions include 171-179 (IGKGSYGVV) and Lys194. The RP domain stretch occupies residues 204-226 (QAGFPRRPPPRGTRPAPGGCIQP). The segment at 205–225 (AGFPRRPPPRGTRPAPGGCIQ) is disordered. Asp312 serves as the catalytic Proton acceptor. The interval 472–477 (ENSVKH) is autoinhibitory domain. The interval 475-500 (VKHIPSLATVILVKTMIRKRSFGNPF) is calmodulin-binding. Residues Pro479, Ser495, Ser511, Thr522, and Ser572 each carry the phosphoserine modification. Positions 497 to 588 (GNPFEGSRRE…LRPEEAMEPE (92 aa)) are disordered. Basic and acidic residues predominate over residues 521-536 (PTRECESLSELKEARQ). Basic and acidic residues predominate over residues 579–588 (LRPEEAMEPE).

Belongs to the protein kinase superfamily. Ser/Thr protein kinase family. In terms of assembly, interacts with calmodulin. In terms of processing, autophosphorylated and phosphorylated by PKA. Each isoform may show a different pattern of phosphorylation. Ubiquitously expressed with higher levels in the brain. Intermediate levels are detected in spleen, prostate, thyroid and leukocytes. The lowest level is in lung.

The protein resides in the nucleus. It localises to the cytoplasm. It is found in the cell projection. Its subcellular location is the neuron projection. It carries out the reaction L-seryl-[protein] + ATP = O-phospho-L-seryl-[protein] + ADP + H(+). The catalysed reaction is L-threonyl-[protein] + ATP = O-phospho-L-threonyl-[protein] + ADP + H(+). Its activity is regulated as follows. Activated by Ca(2+)/calmodulin. Binding of calmodulin may relieve intrasteric autoinhibition. Autophosphorylation does not alter activity or regulation by Ca(2+)/calmodulin. In part, activity is independent on Ca(2+)/calmodulin. Functionally, calcium/calmodulin-dependent protein kinase belonging to a proposed calcium-triggered signaling cascade involved in a number of cellular processes. Isoform 1, isoform 2 and isoform 3 phosphorylate CAMK1 and CAMK4. Isoform 3 phosphorylates CAMK1D. Isoform 4, isoform 5 and isoform 6 lacking part of the calmodulin-binding domain are inactive. Efficiently phosphorylates 5'-AMP-activated protein kinase (AMPK) trimer, including that consisting of PRKAA1, PRKAB1 and PRKAG1. This phosphorylation is stimulated in response to Ca(2+) signals. Seems to be involved in hippocampal activation of CREB1. May play a role in neurite growth. Isoform 3 may promote neurite elongation, while isoform 1 may promoter neurite branching. In Homo sapiens (Human), this protein is Calcium/calmodulin-dependent protein kinase kinase 2 (CAMKK2).